The primary structure comprises 486 residues: Malonate-semialdehyde dehydrogenase 1 (486 aa).

NAD(+) contacts are provided by phenylalanine 154, lysine 178, glutamate 181, arginine 182, and serine 231. Cysteine 286 (nucleophile) is an active-site residue. Residue glutamate 386 coordinates NAD(+).

This sequence belongs to the aldehyde dehydrogenase family. IolA subfamily. Homotetramer.

The enzyme catalyses 3-oxopropanoate + NAD(+) + CoA + H2O = hydrogencarbonate + acetyl-CoA + NADH + H(+). The catalysed reaction is 2-methyl-3-oxopropanoate + NAD(+) + CoA + H2O = propanoyl-CoA + hydrogencarbonate + NADH + H(+). It functions in the pathway polyol metabolism; myo-inositol degradation into acetyl-CoA; acetyl-CoA from myo-inositol: step 7/7. Catalyzes the oxidation of malonate semialdehyde (MSA) and methylmalonate semialdehyde (MMSA) into acetyl-CoA and propanoyl-CoA, respectively. Is involved in a myo-inositol catabolic pathway. Bicarbonate, and not CO2, is the end-product of the enzymatic reaction. The polypeptide is Malonate-semialdehyde dehydrogenase 1 (Bacillus thuringiensis (strain Al Hakam)).